The following is a 235-amino-acid chain: Exosome complex component Rrp4 (235 aa).

Positions 67–139 constitute an S1 motif domain; sequence GDVVIGLIQS…KTRSPLLTVQ (73 aa). The region spanning 149–205 is the KH domain; that stretch reads GKIVEISPAKVPRVIGRKMSMLKTLEEKTECKIFVARNGRIHLECPNEDLEAIAVMA.

It belongs to the RRP4 family. Component of the archaeal exosome complex. Forms a trimer of Rrp4 and/or Csl4 subunits. The trimer associates with a hexameric ring-like arrangement composed of 3 Rrp41-Rrp42 heterodimers.

It localises to the cytoplasm. Its function is as follows. Non-catalytic component of the exosome, which is a complex involved in RNA degradation. Increases the RNA binding and the efficiency of RNA degradation. Confers strong poly(A) specificity to the exosome. This is Exosome complex component Rrp4 from Aeropyrum pernix (strain ATCC 700893 / DSM 11879 / JCM 9820 / NBRC 100138 / K1).